The following is a 574-amino-acid chain: Membrane protein insertase YidC (574 aa).

The next 6 helical transmembrane spans lie at 6-26, 350-370, 376-396, 447-467, 491-511, and 525-545; these read VFLI…WGKE, VIDY…FWVL, FLHN…LVLY, GGCL…WVLV, FILP…TPTP, and PLVF…YWVV.

The protein belongs to the OXA1/ALB3/YidC family. Type 1 subfamily. As to quaternary structure, interacts with the Sec translocase complex via SecD. Specifically interacts with transmembrane segments of nascent integral membrane proteins during membrane integration.

It localises to the cell inner membrane. Required for the insertion and/or proper folding and/or complex formation of integral membrane proteins into the membrane. Involved in integration of membrane proteins that insert both dependently and independently of the Sec translocase complex, as well as at least some lipoproteins. Aids folding of multispanning membrane proteins. This Xanthomonas oryzae pv. oryzae (strain KACC10331 / KXO85) protein is Membrane protein insertase YidC.